Reading from the N-terminus, the 84-residue chain is CDC42 small effector protein 2-A (84 aa).

Residues Cys-10 and Cys-11 are each lipidated (S-palmitoyl cysteine). A CRIB domain is found at 29–42 (IGEPTNFVHTAHVG).

The protein belongs to the CDC42SE/SPEC family.

It localises to the cytoplasm. The protein resides in the cytoskeleton. Its subcellular location is the cell membrane. Probably involved in the organization of the actin cytoskeleton by acting downstream of CDC42, inducing actin filament assembly. This chain is CDC42 small effector protein 2-A (cdc42se2-A), found in Xenopus tropicalis (Western clawed frog).